A 65-amino-acid chain; its full sequence is Large ribosomal subunit protein bL35 (65 aa).

The tract at residues 1-22 (MPKIKTVRGAAKRFKKTGSGGF) is disordered. Residues 10-22 (AAKRFKKTGSGGF) are compositionally biased toward basic residues.

This sequence belongs to the bacterial ribosomal protein bL35 family.

This chain is Large ribosomal subunit protein bL35, found in Serratia proteamaculans (strain 568).